The primary structure comprises 469 residues: E3 ubiquitin-protein ligase TRIM21 (469 aa).

The segment at 16–55 (CSICLDPMVEPMSIECGHSFCQECISEVGKEGGSVCPVCR) adopts an RING-type zinc-finger fold. A B box-type zinc finger spans residues 87 to 128 (PHGELCVVHREKIHLFCEEDGKALCWVCSQSQKHRDHPMVPI). Residues cysteine 92, histidine 95, cysteine 114, and histidine 120 each contribute to the Zn(2+) site. Residues 128-245 (IEEAAQEYQE…RRGSALELLQ (118 aa)) adopt a coiled-coil conformation. Residue serine 266 is modified to Phosphoserine. The B30.2/SPRY domain maps to 268–467 (DLRNVFYVPG…APLILCPLKT (200 aa)).

This sequence belongs to the TRIM/RBCC family. Homotrimer. Interacts (via C-terminus) with IRF8 (via C-terminus). Component of a SCF(SKP2)-like complex containing CUL1, SKP1, TRIM21 and SKP2. Interacts with CALR, CUL1, FBXW11, HSPA5, IKBKB, IRF3, SKP1 and VCP. Interacts with SKP2; the interaction with SKP2 does not depend on an intact F-box domain. Interacts (via N-terminus and C-terminus) with DCP2 (via N-terminus and C-terminus). Interacts with ULK1, BECN1 and with ATG8 family members, including GABARAP, GABARAPL1, GABARAPL2 and MAP1LC3C/LC3C. Interacts with TRIM21 and SQSTM1/sequestosome 1. Interacts with IRF3. Interacts (via the SPRY domain) with NMI (via coiled-coil domain); the interaction promotes 'Lys-63'-linked ubiquitination of NMI. Interacts with IFI35 and NMI; the interaction facilitates NMI-IFI35 complex formation. Autoubiquitinated; does not lead to its proteasomal degradation. Deubiquitinated by USP4; leading to its stabilization.

It localises to the cytoplasm. The protein localises to the cytoplasmic vesicle. The protein resides in the autophagosome. It is found in the nucleus. Its subcellular location is the P-body. It localises to the stress granule. It catalyses the reaction S-ubiquitinyl-[E2 ubiquitin-conjugating enzyme]-L-cysteine + [acceptor protein]-L-lysine = [E2 ubiquitin-conjugating enzyme]-L-cysteine + N(6)-ubiquitinyl-[acceptor protein]-L-lysine.. Its pathway is protein modification; protein ubiquitination. Functionally, E3 ubiquitin-protein ligase whose activity is dependent on E2 enzymes, UBE2D1, UBE2D2, UBE2E1 and UBE2E2. Forms a ubiquitin ligase complex in cooperation with the E2 UBE2D2 that is used not only for the ubiquitination of USP4 and IKBKB but also for its self-ubiquitination. Component of cullin-RING-based SCF (SKP1-CUL1-F-box protein) E3 ubiquitin-protein ligase complexes such as SCF(SKP2)-like complexes. A TRIM21-containing SCF(SKP2)-like complex is shown to mediate ubiquitination of CDKN1B ('Thr-187' phosphorylated-form), thereby promoting its degradation by the proteasome. Monoubiquitinates IKBKB that will negatively regulates Tax-induced NF-kappa-B signaling. Negatively regulates IFN-beta production post-pathogen recognition by catalyzing polyubiquitin-mediated degradation of IRF3. Mediates the ubiquitin-mediated proteasomal degradation of IgG1 heavy chain, which is linked to the VCP-mediated ER-associated degradation (ERAD) pathway. Promotes IRF8 ubiquitination, which enhanced the ability of IRF8 to stimulate cytokine genes transcription in macrophages. Plays a role in the regulation of the cell cycle progression. Enhances the decapping activity of DCP2. Exists as a ribonucleoprotein particle present in all mammalian cells studied and composed of a single polypeptide and one of four small RNA molecules. At least two isoforms are present in nucleated and red blood cells, and tissue specific differences in RO/SSA proteins have been identified. The common feature of these proteins is their ability to bind HY RNAs.2. Involved in the regulation of innate immunity and the inflammatory response in response to IFNG/IFN-gamma. Organizes autophagic machinery by serving as a platform for the assembly of ULK1, Beclin 1/BECN1 and ATG8 family members and recognizes specific autophagy targets, thus coordinating target recognition with assembly of the autophagic apparatus and initiation of autophagy. Also regulates autophagy through FIP200/RB1CC1 ubiquitination and subsequent decreased protein stability. Represses the innate antiviral response by facilitating the formation of the NMI-IFI35 complex through 'Lys-63'-linked ubiquitination of NMI. During viral infection, promotes cell pyroptosis by mediating 'Lys-6'-linked ubiquitination of ISG12a/IFI27, facilitating its translocation into the mitochondria and subsequent CASP3 activation. When up-regulated through the IFN/JAK/STAT signaling pathway, promotes 'Lys-27'-linked ubiquitination of MAVS, leading to the recruitment of TBK1 and up-regulation of innate immunity. Mediates 'Lys-63'-linked polyubiquitination of G3BP1 in response to heat shock, leading to stress granule disassembly. The polypeptide is E3 ubiquitin-protein ligase TRIM21 (TRIM21) (Bos taurus (Bovine)).